Here is a 689-residue protein sequence, read N- to C-terminus: Elongation factor G (689 aa).

Residues 9–283 (AKFRNIGIMA…AIIEFMPSPL (275 aa)) form the tr-type G domain. Residues 18–25 (AHIDAGKT), 82–86 (DTPGH), and 136–139 (NKMD) each bind GTP.

This sequence belongs to the TRAFAC class translation factor GTPase superfamily. Classic translation factor GTPase family. EF-G/EF-2 subfamily.

The protein localises to the cytoplasm. Its function is as follows. Catalyzes the GTP-dependent ribosomal translocation step during translation elongation. During this step, the ribosome changes from the pre-translocational (PRE) to the post-translocational (POST) state as the newly formed A-site-bound peptidyl-tRNA and P-site-bound deacylated tRNA move to the P and E sites, respectively. Catalyzes the coordinated movement of the two tRNA molecules, the mRNA and conformational changes in the ribosome. This Clostridium botulinum (strain ATCC 19397 / Type A) protein is Elongation factor G.